The sequence spans 301 residues: Ribonuclease HIII (301 aa).

Residues 88–301 (WSVLGSDEVG…TQKARQLARQ (214 aa)) enclose the RNase H type-2 domain. Residues D94, E95, and D197 each coordinate a divalent metal cation.

The protein belongs to the RNase HII family. RnhC subfamily. Mn(2+) serves as cofactor. Mg(2+) is required as a cofactor.

It is found in the cytoplasm. It carries out the reaction Endonucleolytic cleavage to 5'-phosphomonoester.. Endonuclease that specifically degrades the RNA of RNA-DNA hybrids. The sequence is that of Ribonuclease HIII from Limosilactobacillus fermentum (strain NBRC 3956 / LMG 18251) (Lactobacillus fermentum).